Consider the following 179-residue polypeptide: Large ribosomal subunit protein uL5 (179 aa).

The protein belongs to the universal ribosomal protein uL5 family. In terms of assembly, part of the 50S ribosomal subunit; part of the 5S rRNA/L5/L18/L25 subcomplex. Contacts the 5S rRNA and the P site tRNA. Forms a bridge to the 30S subunit in the 70S ribosome.

This is one of the proteins that bind and probably mediate the attachment of the 5S RNA into the large ribosomal subunit, where it forms part of the central protuberance. In the 70S ribosome it contacts protein S13 of the 30S subunit (bridge B1b), connecting the 2 subunits; this bridge is implicated in subunit movement. Contacts the P site tRNA; the 5S rRNA and some of its associated proteins might help stabilize positioning of ribosome-bound tRNAs. This chain is Large ribosomal subunit protein uL5, found in Deinococcus geothermalis (strain DSM 11300 / CIP 105573 / AG-3a).